We begin with the raw amino-acid sequence, 234 residues long: Glutathione S-transferase sirG (234 aa).

The region spanning 15–99 is the GST N-terminal domain; it reads LYVVKATPTS…YLTDAYDHEG (85 aa). The 126-residue stretch at 105-230 folds into the GST C-terminal domain; that stretch reads DLWERTQVNN…KALSQKFRPS (126 aa).

The protein belongs to the GST superfamily.

It catalyses the reaction RX + glutathione = an S-substituted glutathione + a halide anion + H(+). It functions in the pathway mycotoxin biosynthesis. Glutathione S-transferase; part of the gene cluster that mediates the biosynthesis of sirodesmin PL, an epipolythiodioxopiperazine (ETP) characterized by a disulfide bridged cyclic dipeptide and that acts as a phytotoxin which is involved in the blackleg didease of canola. SirD catalyzes the O-prenylation of L-tyrosine (L-Tyr) in the presence of dimethylallyl diphosphate (DMAPP) to yield 4-O-dimethylallyl-L-Tyr, and therefore represents probably the first pathway-specific enzyme in the biosynthesis of sirodesmin PL. 4-O-dimethylallyl-L-Tyr, then undergoes condensation with L-Ser in a reaction catalyzed by the non-ribosomal peptide synthase sirP to form the diketopiperazine (DKP) backbone. Further bishydroxylation of the DKP performed by the cytochrome P450 monooxygenase sirC leads to the production of the intermediate phomamide. This step is essential to form the reactive thiol group required for toxicity of sirodesmin PL. The next steps of sirodesmin biosynthesis are not well understood yet, but some predictions could be made from intermediate compounds identification. Phomamide is converted into phomalizarine via oxidation, probably by sirT. Further oxidation, methylation (by sirM or sirN) and reduction steps convert phomalizarine to deacetyl sirodesmin. Finally, acetyltransferase sirH probably acetylates deacetyl sirodesmin to produce sirodesmin PL. The protein is Glutathione S-transferase sirG of Leptosphaeria maculans (Blackleg fungus).